We begin with the raw amino-acid sequence, 620 residues long: Phosphopentomutase (620 aa).

2 residues coordinate alpha-D-glucose 1,6-bisphosphate: R71 and S173. S173 serves as the catalytic Phosphoserine intermediate. Residues S173, D330, D332, and D334 each contribute to the Mg(2+) site. S173 carries the phosphoserine modification. 5 residues coordinate alpha-D-glucose 1,6-bisphosphate: D334, R335, T408, E432, and K446.

It belongs to the phosphohexose mutase family. As to quaternary structure, monomer. Requires Mg(2+) as cofactor. As to expression, highly expressed in lung, spleen and thymus. Expressed at lower levels in liver, brain, kidney, skeletal muscle, testis and heart.

Its subcellular location is the cytoplasm. The protein localises to the cytosol. The enzyme catalyses alpha-D-ribose 1-phosphate = D-ribose 5-phosphate. The catalysed reaction is 2-deoxy-alpha-D-ribose 1-phosphate = 2-deoxy-D-ribose 5-phosphate. It catalyses the reaction alpha-D-glucose 1-phosphate = alpha-D-glucose 6-phosphate. It carries out the reaction O-phospho-L-seryl-[protein] + alpha-D-glucose 1-phosphate = alpha-D-glucose 1,6-bisphosphate + L-seryl-[protein]. The enzyme catalyses alpha-D-glucose 1,6-bisphosphate + L-seryl-[protein] = O-phospho-L-seryl-[protein] + alpha-D-glucose 6-phosphate. Functionally, catalyzes the conversion of the nucleoside breakdown products ribose-1-phosphate and deoxyribose-1-phosphate to the corresponding 5-phosphopentoses. Catalyzes the reversible isomerization of alpha-D-glucose 1-phosphate to alpha-D-glucose 6-phosphate but with a lower catalytic efficiency. The mechanism proceeds via the intermediate compound alpha-D-glucose 1,6-bisphosphate. In vitro, also has a low glucose 1,6-bisphosphate synthase activity which is most probably not physiologically relevant. The polypeptide is Phosphopentomutase (Mus musculus (Mouse)).